We begin with the raw amino-acid sequence, 146 residues long: Large ribosomal subunit protein uL15 (146 aa).

The span at 1 to 13 (MKLHELKPAEGSR) shows a compositional bias: basic and acidic residues. Residues 1 to 52 (MKLHELKPAEGSRKVRNRVGRGIGSGNGKTAGKGHKGQNARSGGGVRLGFEG) form a disordered region. Gly residues-rich tracts occupy residues 21–31 (RGIGSGNGKTA) and 42–52 (SGGGVRLGFEG).

The protein belongs to the universal ribosomal protein uL15 family. Part of the 50S ribosomal subunit.

Binds to the 23S rRNA. This is Large ribosomal subunit protein uL15 from Bacillus anthracis (strain A0248).